A 504-amino-acid polypeptide reads, in one-letter code: Protein DETOXIFICATION 38 (504 aa).

A run of 12 helical transmembrane segments spans residues 56–76 (LLLRLALPAILVYLINGGMGI), 90–110 (LAAASIGNSSFSLVYALMLGM), 139–159 (IVLALVGFPMTILYTFSYPIL), 170–190 (YMGSLYIAGLIPQIFAYAVYF), 208–228 (ISAAALVLQISLTWITVYAMG), 234–254 (IAYVLTISWWFIVGAQTFYVI), 273–295 (GLWSFFKLSAGSAVMICLELWYT), 316–336 (SICMSISALSFMVSVGFNAAV), 356–376 (TWTATFVSFVISVVEALVVIA), 401–421 (FLAVTIILNGIQPVLSGVAVG), 433–453 (IGCYYIVGIPIGCILGFTFNF), and 457–477 (GIWTGMIGGTLMQTLILLYVT).

Belongs to the multi antimicrobial extrusion (MATE) (TC 2.A.66.1) family.

The protein resides in the membrane. This is Protein DETOXIFICATION 38 from Arabidopsis thaliana (Mouse-ear cress).